Reading from the N-terminus, the 297-residue chain is MSAKETIEKLQNARIITALVTPFKENGQINFGAFPKLIEDLLANHTEGLILAGTTAESPTLTHDEELAIFAAVNKIVDGRIPLIAGVGTNDTRDSVEFVKEVAELGYIDAGLAVTPYYNKPSQEGIYQHFKAIATASDLPIILYNIPGRVVTEIQVETILRLAELENVIAIKECTNTDNLAYLIEKLPKDFLVYTGEDGLAFHTKALGGQGVISVASHILGQEFFEMFAEIDQGSIQKAAAIQRKILPKINALFSVTSPAPIKTVLNAKGYEVGGLRLPLVACTTEESKIILEKIGN.

T55 is a binding site for pyruvate. Y144 (proton donor/acceptor) is an active-site residue. K172 acts as the Schiff-base intermediate with substrate in catalysis. I213 lines the pyruvate pocket.

The protein belongs to the DapA family. In terms of assembly, homotetramer; dimer of dimers.

Its subcellular location is the cytoplasm. The enzyme catalyses L-aspartate 4-semialdehyde + pyruvate = (2S,4S)-4-hydroxy-2,3,4,5-tetrahydrodipicolinate + H2O + H(+). Its pathway is amino-acid biosynthesis; L-lysine biosynthesis via DAP pathway; (S)-tetrahydrodipicolinate from L-aspartate: step 3/4. Functionally, catalyzes the condensation of (S)-aspartate-beta-semialdehyde [(S)-ASA] and pyruvate to 4-hydroxy-tetrahydrodipicolinate (HTPA). This is 4-hydroxy-tetrahydrodipicolinate synthase from Lactococcus lactis subsp. lactis (strain IL1403) (Streptococcus lactis).